We begin with the raw amino-acid sequence, 178 residues long: Large ribosomal subunit protein uL5 (178 aa).

It belongs to the universal ribosomal protein uL5 family. Part of the 50S ribosomal subunit; part of the 5S rRNA/L5/L18/L25 subcomplex. Contacts the 5S rRNA and the P site tRNA. Forms a bridge to the 30S subunit in the 70S ribosome.

This is one of the proteins that bind and probably mediate the attachment of the 5S RNA into the large ribosomal subunit, where it forms part of the central protuberance. In the 70S ribosome it contacts protein S13 of the 30S subunit (bridge B1b), connecting the 2 subunits; this bridge is implicated in subunit movement. Contacts the P site tRNA; the 5S rRNA and some of its associated proteins might help stabilize positioning of ribosome-bound tRNAs. The chain is Large ribosomal subunit protein uL5 from Syntrophomonas wolfei subsp. wolfei (strain DSM 2245B / Goettingen).